The following is a 361-amino-acid chain: Large ribosomal subunit protein uL3 (361 aa).

Residues 339–361 (RPPKKKPPVQRPQITYVSVESKQ) are disordered. The segment covering 350–361 (PQITYVSVESKQ) has biased composition (polar residues).

The protein belongs to the universal ribosomal protein uL3 family. Part of the 50S ribosomal subunit. Forms a cluster with proteins L14 and L24e.

Functionally, one of the primary rRNA binding proteins, it binds directly near the 3'-end of the 23S rRNA, where it nucleates assembly of the 50S subunit. The protein is Large ribosomal subunit protein uL3 of Pyrococcus abyssi (strain GE5 / Orsay).